A 2883-amino-acid chain; its full sequence is MPTTLKSGNRLRVDFTKIPQNIAIPNLLQLQRNSYDSFLMPIENGESGIEKVFRSIFPIHDAQNRITLEYAGCEYGKPRYTVREAMERGLTYSVPLKVKIRLVLWEKDEKTGEKLGVKDIKEQSIFVREIPLMTDRTSFIINGVERVVVNQLHRSPGVIFKEEESATSSNKLIYTGQIIPDRGSWLYFEYDAKDTLYVRINKRRKVPVTILFRALGYSKQDVIKTFYPLMKVKAEAGKYLMPFNPEEFIGRIEFDIRDTSGNLIIGAGKRLTQKRAKTLKEQGLEWVEYPVEILLDRHLAEPIVDKESGEVILDTLVQLDEGKLKKIHELGIKEFTIANDLAQGVDASIIHSFVADNESLKLLKQTEKIDDDNDLAAIRIYKVMRPGEPVTKDAAKSFVQQLFFDPERYDLTRVGRMKMNHKLDIEVPDYVTVLTHEDIICTVKYLIRVKNGQGHIDDRDHLGNRRIRAIGELLANELHTGLVKMQKAIRDKLTTMSGNLDELMPHDLVNSKMITSTILEFFTGGQLSQFMDQTNPLSEVTHKRRLSALGEGGLVKERAGFEVRDVHPTHYGRICPIETPEGQNIGLINTLSTYSKVNDLGFIEAPYKKVIEGKVTDEVVYLTATQEEGLVIAPASTVLETDGAIKEDLIETRIDGEIVLSEKSKVDLIDLSPGMVVGVAASLIPFLEHDDANRALMGSNMQRQAVPLLNPDAPVVGTGMEKTVARDSWEAIKATRGGIVEKVDAKNIYILGEDENGAYIDHYSLQKNLRTNQNTCFSQAPIVHEGETIEAGQVIADGPNMDKGELALGKNIRVAFMPWNGYNFEDAIVVSEKLIREDTFTSIHIYEKEIEARELKHGVEEITRDIPNVREEELAHLDESGIVKIGTFVNAGMILVGKVSPKGEVKPTPEERLLRAIFGEKAGHVVNKSLYCPPSLEGTVVDVKIFTKKGYDKDQRAIAAYEEEKARLDLEHHDKLMMLDREEMLRLTSMLSKEPLASDVVVNEKSYKKGELIEKGDLAKINRFAMNALVKSFPKSIQEAYDQLKSNFLEQKKNLSEEHEEKLSVLEKDDILPSGVVKLVKIYVATKRKLKVGDKMAGRHGNKGIVSNIVREIDMPYTKDGEPVEIVLNPLGVPSRMNIGQILEVHLGLVGKKLGAQINEMFENQTKDWMGALRAKIIEIAQVSKMTGVDEFVSSLSDEALLSYARDWRRGVKFATPVFEGVNEEEFTKLFELARIDTDGKTELYDGKTGAKMKERVNVGYMYMLKLHHLVDEKVHARSTGPYSLVTQQPVGGKALFGGQRFGEMEVWALEAYGAAHTLKEMLTVKSDDVEGRVKAYKAITRGEPVKESEIPETFYVLTKELQSLALDVTVYGETEEDSFVPMPIKEDDRPSDFNAFQLMLASPDKIMSWSNGEVKKPETINYRTLKPERDGLFCAKIFGPVRDYECLCGKYKKMRYKGVVCEKCGVEVTSSKVRRSRMGHIELVTPVAHIWYVNSLPSRIGTLLGVKMKDLERVLYYEAYIVKTPGEAFYDNEGTKPVAKYDVLNEEQYQSLNQRFEHTGFVAQMGGEAVKELLAQIDLVELLHTLREEIKATNSEAKKKTIIKRLKVVESFINSGNRPEWMMLTVLPVLPPDLRPLVALDGGKFAVSDVNDLYRRVINRNQRLKRLMELDAPEIIIRNEKRMLQEAVDALFDNGRNANAVKGANKRPLKSLSEIIKGKQGRFRQNLLGKRVDFSGRSVIVVGPNLRMDQCGLPKGMALELFKPHILAKLEEKGYATTLKQAKKMIEQKTNEVWECLQEIVEGYPIMLNRAPTLHKQSIQAFHPKLIDGKAIQLHPLVCSAFNADFDGDQMAVHVPLSQEAITECKLLMLSSMNILLPASGKAVTVPSQDMVLGLYYLSLAKEGSRGEHKLFSNVDEIMIALDADAVEINTKIRTIVDRRPLYTTVGRMIIKSILPDFVPVSLWNKVLKKKDIAALIDHVYKEGGLGITARFLDNLKDLGFKYATTAGISISSDDIRVPDIKRKTVEAAKKKVKEIQAQFGAGLLTEQERYNKIIDVWTDTNNGLGSEMMKLVQADKGGFNSIYMMADSGARGSAAQIRQLSAMRGLMAKPDGTIIETPIISNFKEGLNVLEYFISTHGARKGLADTALKTANAGYLTRKLIDVSQNVKIVMEDCGTHEGVEITDIAIGSELIEPLEERIFGRVVAEDVIDPITNEILVSEGSLIDEEMAKKIKEAGVKAVIIRTPVTCKAEKGVCSKCYGLNLGEGKVTNPGEAVGVVAAQSIGEPGTQLTLRTFHIGGTASRSQEERQVVVEKEGFIRYYNIKTYKNKEGKTVVANRRNAAVLLVEPKIKAPFEGELRVDTAHEEMVISVIGKSETVRYSLRKSDVAKPNELAGVTGKIEGKFYIPYGSGTKVREDGSIVEIIKDGWNIPNRIPYASELKVEDNAPITQKIFSKEKGIVKYYRLKGDHLERYKEITKGEKVTEKGIFAVIADTNDREAIRHYIARGSIIELADGAEVKPDSLVASPASSEQIVIADWDPYSNPIIAEEAGVVKYEDIIPGVTVTEQVDELTGQSRLVVNEYLPTSFKPTIVVASAAGNLIRYALDSKTAIFVGDGAEVEVADVLAKTPKALAKSKDITGGLPRVSELFEARKPKDPAVLAEIDGVVSFGKPIRGKERIIITADDGRTTEYAVDKSKHILVHHGEFVHAGESITDGIVSSHDILRISGEKELHKYIVSEVQQVYRRQGVNIADKHIEIIVSQMLRQVRIVDSGNTKFIEGDLVSKRHFKEENERTIRLGGEPAIAEPVLLGITRAAIGSDSIISAASFQETTKVLTEASIAAKIDFLEDLKENVVLGRMIPVGTGIYKNKKIRIKEKTEGA.

Residues 1–1377 are DNA-directed RNA polymerase subunit beta; that stretch reads MPTTLKSGNR…DVTVYGETEE (1377 aa). The interval 1382–2883 is DNA-directed RNA polymerase subunit beta'; sequence PMPIKEDDRP…IRIKEKTEGA (1502 aa). Cysteine 1447, cysteine 1449, cysteine 1462, and cysteine 1465 together coordinate Zn(2+). Positions 1846, 1848, and 1850 each coordinate Mg(2+). Zn(2+)-binding residues include cysteine 2176, cysteine 2250, cysteine 2257, and cysteine 2260.

This sequence in the N-terminal section; belongs to the RNA polymerase beta chain family. The protein in the C-terminal section; belongs to the RNA polymerase beta' chain family. The RNAP catalytic core consists of 2 alpha, 1 beta/beta' and 1 omega subunit. When a sigma factor is associated with the core the holoenzyme is formed, which can initiate transcription. Requires Mg(2+) as cofactor. It depends on Zn(2+) as a cofactor.

It carries out the reaction RNA(n) + a ribonucleoside 5'-triphosphate = RNA(n+1) + diphosphate. Its function is as follows. DNA-dependent RNA polymerase catalyzes the transcription of DNA into RNA using the four ribonucleoside triphosphates as substrates. The sequence is that of Bifunctional DNA-directed RNA polymerase subunit beta-beta' (rpoBC) from Wolinella succinogenes (strain ATCC 29543 / DSM 1740 / CCUG 13145 / JCM 31913 / LMG 7466 / NCTC 11488 / FDC 602W) (Vibrio succinogenes).